Here is a 379-residue protein sequence, read N- to C-terminus: Ascochitine biosynthesis cluster protein 8 (379 aa).

3 helical membrane passes run 87–107 (ELIASVLALVARFGALVLDLE), 116–136 (VGPVSILGFCTGLLAGAVAAC), and 141–161 (IKVFDLACEVLAISFRLVVAL).

Its subcellular location is the membrane. Its pathway is mycotoxin biosynthesis. Its function is as follows. Part of the gene cluster that mediates the biosynthesis of the selective antifungal agent ascochitine, an o-quinone methide that plays a possible protective role against other microbial competitors in nature and is considered to be important for pathogenicity of legume-associated Didymella species. The pathway probably begins with the synthesis of a keto-aldehyde intermediate by the ascochitine non-reducing polyketide synthase pksAC from successive condensations of 4 malonyl-CoA units, presumably with a simple acetyl-CoA starter unit. Release of the keto-aldehyde intermediate is consistent with the presence of the C-terminal reductive release domain. The HR-PKS (orf7) probably makes a diketide starter unit which is passed to the non-reducing polyketide synthase pksAC for further extension, producing ascochital and ascochitine. The aldehyde dehydrogenase (orf1), the 2-oxoglutarate-dependent dioxygenase (orf3) and the dehydrogenase (orf9) are probably involved in subsequent oxidations of methyl groups to the carboxylic acid of the heterocyclic ring. The ascochitine gene cluster also includes a gene encoding a short peptide with a cupin domain (orf2) that is often found in secondary metabolite gene clusters and which function has still to be determined. This Didymella fabae (Leaf and pod spot disease fungus) protein is Ascochitine biosynthesis cluster protein 8.